Consider the following 182-residue polypeptide: MSVQPETMPDSSNKTNPTVKEVIAYLADKFPLCFSIEGEAKPLKVGLSQDLAEALADDEKVSKTLLRQVLRSYTMSWRYLACCKANAQRIGLQGENVGIVDEAQAEHAAQSLAVAKEAYAARKAEQRKEQRKDFFKKKAREERNAKTMNKAVKKGSPKKDTFAKATAESLAVLTHKFSKGNK.

A disordered region spans residues 125–160 (EQRKEQRKDFFKKKAREERNAKTMNKAVKKGSPKKD).

The protein belongs to the ProQ family.

It is found in the cytoplasm. RNA chaperone with significant RNA binding, RNA strand exchange and RNA duplexing activities. In Haemophilus ducreyi (strain 35000HP / ATCC 700724), this protein is RNA chaperone ProQ.